Consider the following 491-residue polypeptide: MYQKSALELRNAVVSGESSATAIAKYFYNRIKTEDNQIGAFLSLCEERAYEKAAIIDAKVARGEPLGKLAGVPIGIKDNIHIRGLRTTCASKMLENYIAPFDATVVERIEAEDGVILGKLNMDEFAMGSTTQYSAFHPTKNPWGLSCVPGGSSGGSAAAVSARFCPIALGSDTGGSIRQPAAFCGVVGFKPSYGAVSRYGLVAFGSSLDQIGPLTTVVEDVALAMDVFAGKDDRDATSQKFFTGSFQEALSLDVPSLIGVPMGFLDGLRDDVKENFFASLSILERQGSRIVEVDLNILDHAVSVYYIVASAEAATNLARFDGIRYGYRSPEAHSIEDIYTISRVQGFGKEVMRRILLGNYVLSTERQNVYYKKGSAIRAKIIQAFQKAYEKCDVIAMPVCSCPAFADGEILDPTSLYLQDIYTVAMNLAYLPAIAVPSGFSREGLPLGFQVIGQKGKDQQVCQVGYSFQEHSGIKNLYPKGCNKLVDGEVK.

Catalysis depends on charge relay system residues Lys77 and Ser152. Ser176 (acyl-ester intermediate) is an active-site residue.

The protein belongs to the amidase family. GatA subfamily. Heterotrimer of A, B and C subunits.

The enzyme catalyses L-glutamyl-tRNA(Gln) + L-glutamine + ATP + H2O = L-glutaminyl-tRNA(Gln) + L-glutamate + ADP + phosphate + H(+). Allows the formation of correctly charged Gln-tRNA(Gln) through the transamidation of misacylated Glu-tRNA(Gln) in organisms which lack glutaminyl-tRNA synthetase. The reaction takes place in the presence of glutamine and ATP through an activated gamma-phospho-Glu-tRNA(Gln). This Chlamydia abortus (strain DSM 27085 / S26/3) (Chlamydophila abortus) protein is Glutamyl-tRNA(Gln) amidotransferase subunit A.